The sequence spans 672 residues: ABC transporter G family member 21 (672 aa).

Polar residues predominate over residues 1–35 (MMPPNEQESSFPKTPSANRHETSPVQENRFSSPSH). The tract at residues 1-59 (MMPPNEQESSFPKTPSANRHETSPVQENRFSSPSHVNPCLDDDNDHDGPSHQSRQSSVL) is disordered. Residues 50-59 (SHQSRQSSVL) show a composition bias toward low complexity. The ABC transporter domain maps to 68–322 (LKFEELTYSI…FGSIGYQPGS (255 aa)). ATP is bound at residue 117–124 (GPSGSGKT). Positions 411 to 617 (MQFSVLLKRG…CYKLLVGVQY (207 aa)) constitute an ABC transmembrane type-2 domain. 6 consecutive transmembrane segments (helical) span residues 429-449 (FSGLRIFMVMSVSLLSGLLWW), 460-480 (VGLLFFFSIFWGFFPLFNAIF), 512-532 (LPMELILPTIFVTITYWMGGL), 543-563 (LMIVLYNVLVAQGVGLALGAI), 576-596 (VLMLVFLLAGGYYIQHIPGFI), and 649-669 (WDVLALAVMLLLYRVLAYLAL).

It belongs to the ABC transporter superfamily. ABCG family. Eye pigment precursor importer (TC 3.A.1.204) subfamily.

It localises to the membrane. The polypeptide is ABC transporter G family member 21 (ABCG21) (Arabidopsis thaliana (Mouse-ear cress)).